Here is a 172-residue protein sequence, read N- to C-terminus: Small ribosomal subunit protein uS5 (172 aa).

The 64-residue stretch at 17–80 folds into the S5 DRBM domain; the sequence is LREKMIAVNR…EEARRNMVKV (64 aa).

This sequence belongs to the universal ribosomal protein uS5 family. As to quaternary structure, part of the 30S ribosomal subunit. Contacts proteins S4 and S8.

With S4 and S12 plays an important role in translational accuracy. Its function is as follows. Located at the back of the 30S subunit body where it stabilizes the conformation of the head with respect to the body. The polypeptide is Small ribosomal subunit protein uS5 (Verminephrobacter eiseniae (strain EF01-2)).